We begin with the raw amino-acid sequence, 286 residues long: Non-homologous end joining protein Ku (286 aa).

Residues 10 to 175 enclose the Ku domain; the sequence is TVGLVSFPVR…EEVREPDFVV (166 aa). Residues 226–242 show a composition bias toward basic and acidic residues; that stretch reads ERQERQRREAGEVRQAD. Positions 226–270 are disordered; the sequence is ERQERQRREAGEVRQADETDEAAETEVPEVDIPASRAPGETGGEL. Residues 243-254 show a composition bias toward acidic residues; sequence ETDEAAETEVPE.

It belongs to the prokaryotic Ku family. In terms of assembly, homodimer. Interacts with LigD.

In terms of biological role, with LigD forms a non-homologous end joining (NHEJ) DNA repair enzyme, which repairs dsDNA breaks with reduced fidelity. Binds linear dsDNA with 5'- and 3'- overhangs but not closed circular dsDNA nor ssDNA. Recruits and stimulates the ligase activity of LigD. This is Non-homologous end joining protein Ku from Actinosynnema mirum (strain ATCC 29888 / DSM 43827 / JCM 3225 / NBRC 14064 / NCIMB 13271 / NRRL B-12336 / IMRU 3971 / 101).